A 710-amino-acid chain; its full sequence is Interleukin-1 receptor-associated kinase 1 (710 aa).

Residues 27-106 (MCRFYKVMDA…DIITAWHPPA (80 aa)) enclose the Death domain. A Phosphothreonine; by PKC/PRKCI modification is found at Thr66. Residues 107 to 133 (PVVPPSTAAPRPSSISAGSEAGDWSPR) are disordered. The tract at residues 110–211 (PPSTAAPRPS…FCEISQGTCN (102 aa)) is proST region. The segment covering 111–123 (PSTAAPRPSSISA) has biased composition (low complexity). Phosphoserine is present on Ser131. Residues Lys134 and Lys180 each participate in a glycyl lysine isopeptide (Lys-Gly) (interchain with G-Cter in ubiquitin) cross-link. Positions 169–190 (PPLPSSAPSSTKSSPESPVSGL) are disordered. Low complexity predominate over residues 174–188 (SAPSSTKSSPESPVS). Thr209 carries the post-translational modification Phosphothreonine; by IRAK4. The Protein kinase domain occupies 212 to 521 (FSEELRIGEG…TQVYKRLEGL (310 aa)). ATP-binding positions include 218 to 226 (IGEGGFGCV) and Lys239. The active-site Proton acceptor is the Asp340. Residues 342-345 (KSSN) and Asp358 contribute to the ATP site. Residue Ser375 is modified to Phosphoserine. The residue at position 387 (Thr387) is a Phosphothreonine. 2 disordered regions span residues 527-655 (WELE…SEPP) and 689-710 (FPGL…EFQS). The segment covering 537-553 (PSPQENSYMSTTGSAQS) has biased composition (polar residues). A Phosphoserine modification is found at Ser553. The span at 567–576 (APAQAAQQLQ) shows a compositional bias: low complexity. Residues 616 to 639 (SCTQGGTTRESSVRSSPGFQPTTM) show a composition bias toward polar residues. Residues 640–654 (EGSPTGSSSLLSSEP) show a composition bias toward low complexity.

This sequence belongs to the protein kinase superfamily. TKL Ser/Thr protein kinase family. Pelle subfamily. As to quaternary structure, homodimer. Forms a complex with TRAF6, PELI1, IRAK4 and MYD88. Direct binding of SMAD6 to PELI1 prevents complex formation and hence negatively regulates IL1R-TLR signaling and eventually NF-kappa-B-mediated gene expression. The TRAF6-PELI1-IRAK4-MYD88 complex recruits MAP3K7/TAK1, TAB1 and TAB2 to mediate NF-kappa-B activation. Interaction with MYD88 recruits IRAK1 to the stimulated receptor complex. Interacts with TOLLIP; this interaction occurs in the cytosol prior to receptor activation. Interacts with IL1RL1. Interacts (when polyubiquitinated) with IKBKG/NEMO. Interacts with RSAD2/viperin. Interacts with IRAK1BP1. Interacts with PELI2. Interacts with ZC3H12A; this interaction increases the interaction between ZC3H12A and IKBKB/IKKB. Interacts with IRAK4. Interacts with PELI3. Interacts with PELI1 and TRAF6. Interacts with INAVA; the interaction takes place upon PRR stimulation. Interacts (via C-terminus) with NFATC4 (via N-terminus). Mg(2+) is required as a cofactor. In terms of processing, following recruitment on the activated receptor complex, phosphorylated on Thr-209, probably by IRAK4, resulting in a conformational change of the kinase domain, allowing further phosphorylations to take place. Thr-387 phosphorylation in the activation loop is required to achieve full enzymatic activity. Post-translationally, polyubiquitinated by TRAF6 after cell stimulation with IL-1-beta by PELI1, PELI2 and PELI3. Polyubiquitination occurs with polyubiquitin chains linked through 'Lys-63'. Ubiquitination promotes interaction with NEMO/IKBKG. Also sumoylated; leading to nuclear translocation. Highly expressed in liver, followed by kidney and skeletal muscle.

The protein resides in the cytoplasm. The protein localises to the nucleus. It is found in the lipid droplet. The enzyme catalyses L-seryl-[protein] + ATP = O-phospho-L-seryl-[protein] + ADP + H(+). The catalysed reaction is L-threonyl-[protein] + ATP = O-phospho-L-threonyl-[protein] + ADP + H(+). In terms of biological role, serine/threonine-protein kinase that plays a critical role in initiating innate immune response against foreign pathogens. Involved in Toll-like receptor (TLR) and IL-1R signaling pathways. Is rapidly recruited by MYD88 to the receptor-signaling complex upon TLR activation. Association with MYD88 leads to IRAK1 phosphorylation by IRAK4 and subsequent autophosphorylation and kinase activation. Phosphorylates E3 ubiquitin ligases Pellino proteins (PELI1, PELI2 and PELI3) to promote pellino-mediated polyubiquitination of IRAK1. Then, the ubiquitin-binding domain of IKBKG/NEMO binds to polyubiquitinated IRAK1 bringing together the IRAK1-MAP3K7/TAK1-TRAF6 complex and the NEMO-IKKA-IKKB complex. In turn, MAP3K7/TAK1 activates IKKs (CHUK/IKKA and IKBKB/IKKB) leading to NF-kappa-B nuclear translocation and activation. Alternatively, phosphorylates TIRAP to promote its ubiquitination and subsequent degradation. Phosphorylates the interferon regulatory factor 7 (IRF7) to induce its activation and translocation to the nucleus, resulting in transcriptional activation of type I IFN genes, which drive the cell in an antiviral state. When sumoylated, translocates to the nucleus and phosphorylates STAT3. The protein is Interleukin-1 receptor-associated kinase 1 (Irak1) of Mus musculus (Mouse).